The sequence spans 471 residues: ATP synthase subunit beta (471 aa).

An ATP-binding site is contributed by 156 to 163 (GGAGVGKT).

Belongs to the ATPase alpha/beta chains family. In terms of assembly, F-type ATPases have 2 components, CF(1) - the catalytic core - and CF(0) - the membrane proton channel. CF(1) has five subunits: alpha(3), beta(3), gamma(1), delta(1), epsilon(1). CF(0) has three main subunits: a(1), b(2) and c(9-12). The alpha and beta chains form an alternating ring which encloses part of the gamma chain. CF(1) is attached to CF(0) by a central stalk formed by the gamma and epsilon chains, while a peripheral stalk is formed by the delta and b chains.

Its subcellular location is the cell membrane. The enzyme catalyses ATP + H2O + 4 H(+)(in) = ADP + phosphate + 5 H(+)(out). Produces ATP from ADP in the presence of a proton gradient across the membrane. The catalytic sites are hosted primarily by the beta subunits. The chain is ATP synthase subunit beta from Mycoplasmoides gallisepticum (strain R(low / passage 15 / clone 2)) (Mycoplasma gallisepticum).